The following is a 40-amino-acid chain: Photosystem II reaction center protein J (40 aa).

A helical membrane pass occupies residues 8 to 28 (IPLWLIGTVAGILVLGLLGIF).

It belongs to the PsbJ family. In terms of assembly, PSII is composed of 1 copy each of membrane proteins PsbA, PsbB, PsbC, PsbD, PsbE, PsbF, PsbH, PsbI, PsbJ, PsbK, PsbL, PsbM, PsbT, PsbX, PsbY, PsbZ, Psb30/Ycf12, at least 3 peripheral proteins of the oxygen-evolving complex and a large number of cofactors. It forms dimeric complexes.

The protein localises to the plastid. Its subcellular location is the chloroplast thylakoid membrane. Functionally, one of the components of the core complex of photosystem II (PSII). PSII is a light-driven water:plastoquinone oxidoreductase that uses light energy to abstract electrons from H(2)O, generating O(2) and a proton gradient subsequently used for ATP formation. It consists of a core antenna complex that captures photons, and an electron transfer chain that converts photonic excitation into a charge separation. The chain is Photosystem II reaction center protein J from Physcomitrium patens (Spreading-leaved earth moss).